The following is a 241-amino-acid chain: Ubiquinone biosynthesis O-methyltransferase (241 aa).

S-adenosyl-L-methionine-binding residues include arginine 44, glycine 64, aspartate 85, and methionine 129.

It belongs to the methyltransferase superfamily. UbiG/COQ3 family.

The catalysed reaction is a 3-demethylubiquinol + S-adenosyl-L-methionine = a ubiquinol + S-adenosyl-L-homocysteine + H(+). It catalyses the reaction a 3-(all-trans-polyprenyl)benzene-1,2-diol + S-adenosyl-L-methionine = a 2-methoxy-6-(all-trans-polyprenyl)phenol + S-adenosyl-L-homocysteine + H(+). Its pathway is cofactor biosynthesis; ubiquinone biosynthesis. In terms of biological role, O-methyltransferase that catalyzes the 2 O-methylation steps in the ubiquinone biosynthetic pathway. The sequence is that of Ubiquinone biosynthesis O-methyltransferase from Serratia proteamaculans (strain 568).